The sequence spans 590 residues: Putative laccase-19 (590 aa).

An N-terminal signal peptide occupies residues methionine 1–alanine 28. 2 Plastocyanin-like domains span residues valine 36–glycine 152 and lysine 161–alanine 315. N-linked (GlcNAc...) asparagine glycans are attached at residues asparagine 41 and asparagine 47. 2 residues coordinate Cu cation: histidine 86 and histidine 88. Residue asparagine 120 is glycosylated (N-linked (GlcNAc...) asparagine). Residues histidine 131 and histidine 133 each coordinate Cu cation. N-linked (GlcNAc...) asparagine glycans are attached at residues asparagine 205, asparagine 344, asparagine 378, asparagine 397, asparagine 434, and asparagine 465. The Plastocyanin-like 3 domain occupies aspartate 424–proline 566. Cu cation-binding residues include asparagine 483, histidine 486, histidine 488, histidine 545, cysteine 546, histidine 547, histidine 551, and methionine 556. Positions glycine 565–proline 590 are disordered.

Belongs to the multicopper oxidase family. Cu cation serves as cofactor.

The protein localises to the secreted. The protein resides in the extracellular space. It is found in the apoplast. The enzyme catalyses 4 hydroquinone + O2 = 4 benzosemiquinone + 2 H2O. Its function is as follows. Lignin degradation and detoxification of lignin-derived products. The polypeptide is Putative laccase-19 (LAC19) (Oryza sativa subsp. indica (Rice)).